Reading from the N-terminus, the 295-residue chain is Farnesyl diphosphate synthase (295 aa).

Lysine 46, arginine 49, and histidine 78 together coordinate isopentenyl diphosphate. Aspartate 85 and aspartate 91 together coordinate Mg(2+). Arginine 96 contacts (2E)-geranyl diphosphate. Isopentenyl diphosphate is bound at residue arginine 97. The (2E)-geranyl diphosphate site is built by lysine 180, threonine 181, glutamine 220, and lysine 237.

Belongs to the FPP/GGPP synthase family. It depends on Mg(2+) as a cofactor.

It localises to the cytoplasm. It carries out the reaction isopentenyl diphosphate + (2E)-geranyl diphosphate = (2E,6E)-farnesyl diphosphate + diphosphate. In Haemophilus influenzae (strain ATCC 51907 / DSM 11121 / KW20 / Rd), this protein is Farnesyl diphosphate synthase (ispA).